A 453-amino-acid chain; its full sequence is Transcription factor radR (453 aa).

Residues 1-30 (MPNNLQHQEGSYSLRSSNDVSPADDWTQTN) are compositionally biased toward polar residues. The interval 1-45 (MPNNLQHQEGSYSLRSSNDVSPADDWTQTNDPKEKKRIQNRVAQR) is disordered. In terms of domain architecture, bZIP spans 30 to 62 (NDPKEKKRIQNRVAQRTYRNRIRARLEELENKI). A basic motif region spans residues 33–50 (KEKKRIQNRVAQRTYRNR). Residues 51 to 58 (IRARLEEL) are leucine-zipper. Residues 160 to 184 (APRAAQARSIAPTSTGMHQISPSYG) form a disordered region. Residues 170-181 (APTSTGMHQISP) show a composition bias toward polar residues.

It belongs to the bZIP family.

Its subcellular location is the nucleus. Its function is as follows. Transcription factor that positively regulates the expression of the gene clusters that mediate the biosynthesis of pestheic acid, a diphenyl ether which is a biosynthetic precursor of the unique chloropupukeananes. The chain is Transcription factor radR from Floropilus chiversii (Chaetomium chiversii).